The sequence spans 339 residues: Dihydroorotase (339 aa).

Histidine 12 and histidine 14 together coordinate Zn(2+). Substrate is bound by residues histidine 14–arginine 16 and asparagine 40. 4 residues coordinate Zn(2+): lysine 94, histidine 133, histidine 167, and aspartate 239. Lysine 94 bears the N6-carboxylysine mark. Residue histidine 133 participates in substrate binding. Residue aspartate 239 is part of the active site. Residues histidine 243 and alanine 255 each coordinate substrate.

The protein belongs to the metallo-dependent hydrolases superfamily. DHOase family. Class II DHOase subfamily. In terms of assembly, homodimer. Zn(2+) serves as cofactor.

The catalysed reaction is (S)-dihydroorotate + H2O = N-carbamoyl-L-aspartate + H(+). It participates in pyrimidine metabolism; UMP biosynthesis via de novo pathway; (S)-dihydroorotate from bicarbonate: step 3/3. Catalyzes the reversible cyclization of carbamoyl aspartate to dihydroorotate. The protein is Dihydroorotase of Helicobacter acinonychis (strain Sheeba).